The chain runs to 358 residues: MANDENKQKALAAALGQIEKQFGKGSIMRLGENRSMDVETISTGSLSLDIALGAGGLPMGRIVEIYGPESSGKTTLTLQVIASAQREGKTCAFIDAEHALDPVYAKKLGVDIDNLLCSQPDTGEQALEICDALSRSGAVDVIVVDSVAALTPKAEIEGEIGDSHMGLAARMMSQAMRKLAGNLKNSNTLLIFINQIRMKIGVMFGNPETTTGGNALKFYASVRLDIRRTGSVKNGDEVVGSETRVKVVKNKIAAPFKQAEFQILYGEGINTFGELVDLGVKHKMVEKAGAWYSYNGDKIGQGKANATIYLKEHPEVSAELDKKLRELLLNNTGGFSSAVSDYVADYEDNGEEVKNEEF.

67–74 (GPESSGKT) lines the ATP pocket.

The protein belongs to the RecA family.

It localises to the cytoplasm. Functionally, can catalyze the hydrolysis of ATP in the presence of single-stranded DNA, the ATP-dependent uptake of single-stranded DNA by duplex DNA, and the ATP-dependent hybridization of homologous single-stranded DNAs. It interacts with LexA causing its activation and leading to its autocatalytic cleavage. This Xenorhabdus bovienii (Xenorhabdus nematophila subsp. bovienii) protein is Protein RecA.